Here is a 433-residue protein sequence, read N- to C-terminus: Xylose isomerase (433 aa).

Residues histidine 99 and aspartate 102 contribute to the active site. Glutamate 230, glutamate 266, histidine 269, aspartate 294, aspartate 305, aspartate 307, and aspartate 337 together coordinate Mg(2+).

It belongs to the xylose isomerase family. Homotetramer. The cofactor is Mg(2+).

The protein resides in the cytoplasm. The catalysed reaction is alpha-D-xylose = alpha-D-xylulofuranose. The protein is Xylose isomerase of Roseobacter denitrificans (strain ATCC 33942 / OCh 114) (Erythrobacter sp. (strain OCh 114)).